Here is a 167-residue protein sequence, read N- to C-terminus: Ubiquitin-fold modifier-conjugating enzyme 1 (167 aa).

Cys-116 serves as the catalytic Glycyl thioester intermediate.

It belongs to the ubiquitin-conjugating enzyme family. UFC1 subfamily. In terms of assembly, interacts with UBA5 (via C-terminus). Interacts with UFL1. Interacts with UFM1.

In terms of biological role, E2-like enzyme which specifically catalyzes the second step in ufmylation. Accepts the ubiquitin-like modifier UFM1 from the E1 enzyme UBA5 and forms an intermediate with UFM1 via a thioester linkage. Ufmylation is involved in various processes, such as ribosome recycling, response to DNA damage, interferon response or reticulophagy (also called ER-phagy). The polypeptide is Ubiquitin-fold modifier-conjugating enzyme 1 (Salmo salar (Atlantic salmon)).